The primary structure comprises 410 residues: LL-diaminopimelate aminotransferase (410 aa).

Tyrosine 15 and glycine 42 together coordinate substrate. Residues tyrosine 72, 108-109, tyrosine 132, asparagine 187, tyrosine 218, and 246-248 each bind pyridoxal 5'-phosphate; these read AK and SFS. Substrate contacts are provided by lysine 109, tyrosine 132, and asparagine 187. Lysine 249 carries the N6-(pyridoxal phosphate)lysine modification. Arginine 257 and asparagine 292 together coordinate pyridoxal 5'-phosphate. 2 residues coordinate substrate: asparagine 292 and arginine 388.

This sequence belongs to the class-I pyridoxal-phosphate-dependent aminotransferase family. LL-diaminopimelate aminotransferase subfamily. Homodimer. Pyridoxal 5'-phosphate is required as a cofactor.

It carries out the reaction (2S,6S)-2,6-diaminopimelate + 2-oxoglutarate = (S)-2,3,4,5-tetrahydrodipicolinate + L-glutamate + H2O + H(+). It functions in the pathway amino-acid biosynthesis; L-lysine biosynthesis via DAP pathway; LL-2,6-diaminopimelate from (S)-tetrahydrodipicolinate (aminotransferase route): step 1/1. In terms of biological role, involved in the synthesis of meso-diaminopimelate (m-DAP or DL-DAP), required for both lysine and peptidoglycan biosynthesis. Catalyzes the direct conversion of tetrahydrodipicolinate to LL-diaminopimelate. Is also able to catalyze the reverse reaction in vitro, i.e. the transamination of LL-diaminopimelate with 2-oxoglutarate to produce 2-oxo-6-aminopimelate (in equilibrium with tetrahydrodipicolinate) and glutamate. Has maximal aminotransferase activity using 2-oxoglutarate as an amino group acceptor, and cannot use oxaloacetate instead of 2-oxoglutarate, although 2-oxoadipate can substitute with 21% relative activity. Cannot use m-DAP, lysine or ornithine as the amino-group donor, when using 2-oxoglutarate as the amino-group acceptor. This is LL-diaminopimelate aminotransferase from Methanothermobacter thermautotrophicus (strain ATCC 29096 / DSM 1053 / JCM 10044 / NBRC 100330 / Delta H) (Methanobacterium thermoautotrophicum).